The primary structure comprises 134 residues: ATP synthase epsilon chain (134 aa).

It belongs to the ATPase epsilon chain family. As to quaternary structure, F-type ATPases have 2 components, CF(1) - the catalytic core - and CF(0) - the membrane proton channel. CF(1) has five subunits: alpha(3), beta(3), gamma(1), delta(1), epsilon(1). CF(0) has three main subunits: a, b and c.

Its subcellular location is the cellular thylakoid membrane. Its function is as follows. Produces ATP from ADP in the presence of a proton gradient across the membrane. In Prochlorococcus marinus (strain MIT 9301), this protein is ATP synthase epsilon chain.